Here is a 1463-residue protein sequence, read N- to C-terminus: Clustered mitochondria protein homolog (1463 aa).

The tract at residues M1 to E79 is disordered. Residues K10 to G22 are compositionally biased toward low complexity. A Clu domain is found at R374–L616. Disordered regions lie at residues A684–A753, G942–S988, and Q1387–S1463. Residues K692–A702 show a composition bias toward low complexity. Over residues E703–T731 the composition is skewed to basic and acidic residues. The segment covering G955–K964 has biased composition (basic residues). Residues R965–R980 show a composition bias toward gly residues. Residues A1438 to A1456 are compositionally biased toward low complexity.

It belongs to the CLU family.

The protein resides in the cytoplasm. MRNA-binding protein involved in proper cytoplasmic distribution of mitochondria. This is Clustered mitochondria protein homolog from Anopheles gambiae (African malaria mosquito).